The primary structure comprises 478 residues: Proline--tRNA ligase (478 aa).

Belongs to the class-II aminoacyl-tRNA synthetase family. ProS type 3 subfamily. In terms of assembly, homodimer.

Its subcellular location is the cytoplasm. It catalyses the reaction tRNA(Pro) + L-proline + ATP = L-prolyl-tRNA(Pro) + AMP + diphosphate. Catalyzes the attachment of proline to tRNA(Pro) in a two-step reaction: proline is first activated by ATP to form Pro-AMP and then transferred to the acceptor end of tRNA(Pro). The chain is Proline--tRNA ligase from Ruminiclostridium cellulolyticum (strain ATCC 35319 / DSM 5812 / JCM 6584 / H10) (Clostridium cellulolyticum).